A 416-amino-acid chain; its full sequence is ATP-dependent Clp protease ATP-binding subunit ClpX (416 aa).

Residues 1-54 (MFKFGDEKGQLKCSFCGKSQEQVRKLVAGPGVYICDECIELCNEIIEEELNDDV) form the ClpX-type ZB domain. Residues cysteine 13, cysteine 16, cysteine 35, and cysteine 38 each contribute to the Zn(2+) site. 117–124 (PTGCGKTL) serves as a coordination point for ATP.

Belongs to the ClpX chaperone family. In terms of assembly, component of the ClpX-ClpP complex. Forms a hexameric ring that, in the presence of ATP, binds to fourteen ClpP subunits assembled into a disk-like structure with a central cavity, resembling the structure of eukaryotic proteasomes.

Functionally, ATP-dependent specificity component of the Clp protease. It directs the protease to specific substrates. Can perform chaperone functions in the absence of ClpP. The chain is ATP-dependent Clp protease ATP-binding subunit ClpX from Halothermothrix orenii (strain H 168 / OCM 544 / DSM 9562).